The chain runs to 446 residues: N-succinylarginine dihydrolase (446 aa).

Substrate-binding positions include 19 to 28, Asn110, and 137 to 138; these read AGLSFGNVAS and HR. Glu174 is an active-site residue. Arg213 contributes to the substrate binding site. Residue His249 is part of the active site. Substrate-binding residues include Asp251 and Asn364. Cys370 serves as the catalytic Nucleophile.

It belongs to the succinylarginine dihydrolase family. In terms of assembly, homodimer.

It catalyses the reaction N(2)-succinyl-L-arginine + 2 H2O + 2 H(+) = N(2)-succinyl-L-ornithine + 2 NH4(+) + CO2. It functions in the pathway amino-acid degradation; L-arginine degradation via AST pathway; L-glutamate and succinate from L-arginine: step 2/5. Its function is as follows. Catalyzes the hydrolysis of N(2)-succinylarginine into N(2)-succinylornithine, ammonia and CO(2). This is N-succinylarginine dihydrolase from Burkholderia thailandensis (strain ATCC 700388 / DSM 13276 / CCUG 48851 / CIP 106301 / E264).